The sequence spans 283 residues: MIINHNLSAVNAHRSLKFNELAVDKTMKALSSGMRINSAADDASGLAVSEKLRTQVNGLRQAERNTEDGMSFIQTAEGFLEQTSNIIQRIRVLAIQTSNGIYSNEDRQLVQVEVSALVDEVDRIASQAEFNKFKLFEGQFARGSRVASMWFHMGPNQNQRERFYIGTMTSKALKLVKADGRPIAISSPGEANDVIGLADAALTKIMKQRADMGAYYNRLEYTAKGLMGAYENMQASESRIRDADMAEEVVSLTTKQILVQSGTAMLAQANMKPNSVLKLLQQI.

The protein belongs to the bacterial flagellin family. The flagellum consists of two outer layers around a core that contains several antigenically related polypeptides.

It localises to the periplasmic flagellum. The protein resides in the periplasm. In terms of biological role, component of the core of the flagella. In Leptospira interrogans serogroup Icterohaemorrhagiae serovar copenhageni (strain Fiocruz L1-130), this protein is Flagellar filament 35 kDa core protein (flaB).